Consider the following 456-residue polypeptide: uncharacterized protein (456 aa).

The TRAM domain maps to 5–63 (LVKKGQQISLKIKRLGINGEGIGYYKKLIIFVPGALPKEEVTATITNVTPKFAEGTLQS). [4Fe-4S] cluster-binding residues include C76, C82, C85, and C165. Positions 289, 318, 339, and 387 each coordinate S-adenosyl-L-methionine. C414 functions as the Nucleophile in the catalytic mechanism.

This sequence belongs to the class I-like SAM-binding methyltransferase superfamily. RNA M5U methyltransferase family.

This is an uncharacterized protein from Enterococcus faecalis (strain ATCC 700802 / V583).